Here is a 414-residue protein sequence, read N- to C-terminus: Phosphoglycerate kinase (414 aa).

Substrate contacts are provided by residues 20-22 (DIN), arginine 37, 60-63 (HQSR), arginine 117, and arginine 164. ATP is bound by residues glutamate 338 and 364-367 (GGHL).

It belongs to the phosphoglycerate kinase family. Monomer.

It localises to the cytoplasm. The enzyme catalyses (2R)-3-phosphoglycerate + ATP = (2R)-3-phospho-glyceroyl phosphate + ADP. It functions in the pathway carbohydrate degradation; glycolysis; pyruvate from D-glyceraldehyde 3-phosphate: step 2/5. The polypeptide is Phosphoglycerate kinase (Methanococcus maripaludis (strain DSM 14266 / JCM 13030 / NBRC 101832 / S2 / LL)).